Consider the following 193-residue polypeptide: Endoribonuclease YbeY (193 aa).

Zn(2+)-binding residues include His109, His113, and His119. Residues 143–193 (GAALREGRREGRAGEAKDRWTRSPTSISTPSRSGSTARGSRAKTSRAGSRT) are disordered. Residues 147 to 163 (REGRREGRAGEAKDRWT) show a composition bias toward basic and acidic residues. A compositionally biased stretch (low complexity) spans 164-181 (RSPTSISTPSRSGSTARG).

It belongs to the endoribonuclease YbeY family. Zn(2+) serves as cofactor.

It is found in the cytoplasm. Single strand-specific metallo-endoribonuclease involved in late-stage 70S ribosome quality control and in maturation of the 3' terminus of the 16S rRNA. The sequence is that of Endoribonuclease YbeY from Anaeromyxobacter dehalogenans (strain 2CP-C).